Consider the following 1171-residue polypeptide: Phytochrome B (1171 aa).

The segment covering 1–19 has biased composition (low complexity); sequence MASGSRATPTRSPSSARPA. The interval 1–53 is disordered; that stretch reads MASGSRATPTRSPSSARPAAPRHQHHHSQSSGGSTSRAGGGGGGGGGGGGGAA. Residues 38–52 are compositionally biased toward gly residues; sequence AGGGGGGGGGGGGGA. Residues 259–442 form the GAF domain; it reads DVKLLCDTVV…AFGLQLNMEL (184 aa). Position 364 (Cys-364) interacts with phytochromobilin. 2 PAS domains span residues 661–732 and 795–866; these read VARE…LRGD and DYKA…MIVL. Residues 943–1161 enclose the Histidine kinase domain; the sequence is YIYQEIKNPL…FFHIVLELPQ (219 aa).

It belongs to the phytochrome family. Homodimer. Post-translationally, contains one covalently linked phytochromobilin chromophore.

Its function is as follows. Regulatory photoreceptor which exists in two forms that are reversibly interconvertible by light: the Pr form that absorbs maximally in the red region of the spectrum and the Pfr form that absorbs maximally in the far-red region. Photoconversion of Pr to Pfr induces an array of morphogenic responses, whereas reconversion of Pfr to Pr cancels the induction of those responses. Pfr controls the expression of a number of nuclear genes including those encoding the small subunit of ribulose-bisphosphate carboxylase, chlorophyll A/B binding protein, protochlorophyllide reductase, rRNA, etc. It also controls the expression of its own gene(s) in a negative feedback fashion. The chain is Phytochrome B (PHYB) from Oryza sativa subsp. indica (Rice).